The primary structure comprises 1168 residues: Transcription-repair-coupling factor (1168 aa).

Residues 633 to 794 (DMQKSRPMDR…MLGVRDLSVI (162 aa)) enclose the Helicase ATP-binding domain. ATP is bound at residue 646–653 (GDVGYGKT). The DEEQ box motif lies at 747–750 (DEEQ). In terms of domain architecture, Helicase C-terminal spans 808–969 (VLEQNMSFIK…GFKIAMRDLN (162 aa)).

In the N-terminal section; belongs to the UvrB family. This sequence in the C-terminal section; belongs to the helicase family. RecG subfamily.

Its subcellular location is the cytoplasm. Its function is as follows. Couples transcription and DNA repair by recognizing RNA polymerase (RNAP) stalled at DNA lesions. Mediates ATP-dependent release of RNAP and its truncated transcript from the DNA, and recruitment of nucleotide excision repair machinery to the damaged site. This is Transcription-repair-coupling factor from Staphylococcus aureus (strain USA300).